A 540-amino-acid polypeptide reads, in one-letter code: Chaperonin GroEL (540 aa).

Residues 30 to 33 (TLGP), 87 to 91 (DGTTT), Gly-415, and Asp-496 each bind ATP.

It belongs to the chaperonin (HSP60) family. Forms a cylinder of 14 subunits composed of two heptameric rings stacked back-to-back. Interacts with the co-chaperonin GroES.

Its subcellular location is the cytoplasm. It carries out the reaction ATP + H2O + a folded polypeptide = ADP + phosphate + an unfolded polypeptide.. Its function is as follows. Together with its co-chaperonin GroES, plays an essential role in assisting protein folding. The GroEL-GroES system forms a nano-cage that allows encapsulation of the non-native substrate proteins and provides a physical environment optimized to promote and accelerate protein folding. The protein is Chaperonin GroEL of Symbiobacterium thermophilum (strain DSM 24528 / JCM 14929 / IAM 14863 / T).